The following is a 367-amino-acid chain: Nodulation protein NolF (367 aa).

It belongs to the membrane fusion protein (MFP) (TC 8.A.1) family.

In terms of biological role, involved in the production of Medicago-specific nodulation signal molecule. This Rhizobium meliloti (strain 1021) (Ensifer meliloti) protein is Nodulation protein NolF (nolF).